The following is a 128-amino-acid chain: Sulfurtransferase TusD (128 aa).

Catalysis depends on Cys-78, which acts as the Cysteine persulfide intermediate.

The protein belongs to the DsrE/TusD family. In terms of assembly, heterohexamer, formed by a dimer of trimers. The hexameric TusBCD complex contains 2 copies each of TusB, TusC and TusD. The TusBCD complex interacts with TusE.

The protein resides in the cytoplasm. Its function is as follows. Part of a sulfur-relay system required for 2-thiolation of 5-methylaminomethyl-2-thiouridine (mnm(5)s(2)U) at tRNA wobble positions. Accepts sulfur from TusA and transfers it in turn to TusE. The chain is Sulfurtransferase TusD from Salmonella dublin (strain CT_02021853).